We begin with the raw amino-acid sequence, 195 residues long: ATP-dependent Clp protease proteolytic subunit 2 (195 aa).

The active-site Nucleophile is the Ser-95. His-120 is a catalytic residue.

It belongs to the peptidase S14 family. In terms of assembly, fourteen ClpP subunits assemble into 2 heptameric rings which stack back to back to give a disk-like structure with a central cavity, resembling the structure of eukaryotic proteasomes.

The protein localises to the cytoplasm. The enzyme catalyses Hydrolysis of proteins to small peptides in the presence of ATP and magnesium. alpha-casein is the usual test substrate. In the absence of ATP, only oligopeptides shorter than five residues are hydrolyzed (such as succinyl-Leu-Tyr-|-NHMec, and Leu-Tyr-Leu-|-Tyr-Trp, in which cleavage of the -Tyr-|-Leu- and -Tyr-|-Trp bonds also occurs).. Functionally, cleaves peptides in various proteins in a process that requires ATP hydrolysis. Has a chymotrypsin-like activity. Plays a major role in the degradation of misfolded proteins. The sequence is that of ATP-dependent Clp protease proteolytic subunit 2 from Methylococcus capsulatus (strain ATCC 33009 / NCIMB 11132 / Bath).